We begin with the raw amino-acid sequence, 445 residues long: MTLQKDKVIKWVRFTPPQVLAIGFFLTIIIGAVLLMLPISTTKPLSWIDALFTAASATTVTGLAVVDTGTQFTVFGQTVIMGLIQIGGLGFMTFAVLIVMILGKKIGLKERMLVQEALNQPTIGGVIGLVKVLFLFSISIELIAALILSIRLVPQYGWSSGLFASLFHAISAFNNAGFSLWPDNLMSYVGDPTVNLVITFLFITGGIGFTVLFDVMKNRRFKTFSLHTKLMLTGTLMLNAIAMLTVFILEYSNPGTLGHLHIVDKLWASYFQAVTPRTAGFNSLDFGSMREGTIVFTLLLMFIGAGSASTASGIKLTTFIVILTSVIAYLRGKKETVIFRRSIKYPIIIKALAVSVTSLFIVFLGIFALTITEQAPFLQIVFETFSAFGTVGLTMGLTPELTTAGKCIIIVIMFIGRIGPLTFVFSFAKTEQSNIRYPDGEVFTG.

12 helical membrane passes run 19–39 (VLAIGFFLTIIIGAVLLMLPI), 46–66 (SWIDALFTAASATTVTGLAVV), 79–99 (VIMGLIQIGGLGFMTFAVLIV), 127–147 (IGLVKVLFLFSISIELIAALI), 161–181 (GLFASLFHAISAFNNAGFSLW), 196–216 (LVITFLFITGGIGFTVLFDVM), 230–250 (LMLTGTLMLNAIAMLTVFILE), 286–306 (FGSMREGTIVFTLLLMFIGAG), 313–333 (GIKLTTFIVILTSVIAYLRGK), 351–371 (ALAVSVTSLFIVFLGIFALTI), 377–397 (FLQIVFETFSAFGTVGLTMGL), and 408–428 (IIIVIMFIGRIGPLTFVFSFA).

Belongs to the TrkH potassium transport family. Ktr (TC 2.A.38.4) subfamily. As to quaternary structure, homodimer. Part of the KtrAB complex formed by an octameric catalytic ring of KtrA and a membrane associated dimer of KtrB forming a potassium channel.

Its subcellular location is the cell membrane. Its function is as follows. Integral membrane subunit of the KtrAB potassium uptake transporter. The 2 major potassium transporter complexes KtrAB and KtrCD confer resistance to both suddenly imposed and prolonged osmotic stress. This Bacillus subtilis (strain 168) protein is Ktr system potassium uptake protein B (ktrB).